The sequence spans 546 residues: Chaperonin GroEL (546 aa).

ATP is bound by residues 30–33, Lys-51, 87–91, Gly-415, 479–481, and Asp-495; these read TLGP, DGTTT, and NAA. Positions 526–546 are disordered; sequence KKDEPAMPAGGGMGGMGGMDF. A compositionally biased stretch (gly residues) spans 534-546; the sequence is AGGGMGGMGGMDF.

The protein belongs to the chaperonin (HSP60) family. Forms a cylinder of 14 subunits composed of two heptameric rings stacked back-to-back. Interacts with the co-chaperonin GroES.

Its subcellular location is the cytoplasm. The enzyme catalyses ATP + H2O + a folded polypeptide = ADP + phosphate + an unfolded polypeptide.. Its function is as follows. Together with its co-chaperonin GroES, plays an essential role in assisting protein folding. The GroEL-GroES system forms a nano-cage that allows encapsulation of the non-native substrate proteins and provides a physical environment optimized to promote and accelerate protein folding. This is Chaperonin GroEL from Xanthomonas campestris pv. campestris (strain 8004).